Reading from the N-terminus, the 819-residue chain is Protein O-mannosyl-transferase tmem260 (819 aa).

Residues 1–10 (MNNSPTLSNT) are compositionally biased toward polar residues. Residues 1–68 (MNNSPTLSNT…NNNNNIINVN (68 aa)) are disordered. The span at 15–68 (NNNNNSNSNSNSNNNNNNNNNNNNNSNNNNNNNNNVNRNVNNRNNNNNNIINVN) shows a compositional bias: low complexity. 3 N-linked (GlcNAc...) asparagine glycosylation sites follow: N18, N38, and N70. The next 7 membrane-spanning stretches (helical) occupy residues 113 to 133 (IACI…TQYP), 152 to 172 (VAHP…SHII), 185 to 205 (FMSS…VYLW), 210 to 230 (WCGL…MYQI), 232 to 252 (GEVF…GVWY), 285 to 305 (LTNQ…LMFI), and 316 to 336 (ILSN…LLFI). A glycan (N-linked (GlcNAc...) asparagine) is linked at N349. Transmembrane regions (helical) follow at residues 391-411 (LIIQ…LNLL), 427-447 (MIIF…NLPI), 459-479 (FFMQ…KSIF), and 505-525 (YLLP…NYNL). 4 N-linked (GlcNAc...) asparagine glycosylation sites follow: N531, N686, N693, and N783.

It belongs to the glycosyltransferase 117 (GT117) family.

The protein localises to the endoplasmic reticulum membrane. The enzyme catalyses a di-trans,poly-cis-dolichyl beta-D-mannosyl phosphate + L-seryl-[protein] = 3-O-(alpha-D-mannosyl)-L-seryl-[protein] + a di-trans,poly-cis-dolichyl phosphate + H(+). The catalysed reaction is a di-trans,poly-cis-dolichyl beta-D-mannosyl phosphate + L-threonyl-[protein] = 3-O-(alpha-D-mannosyl)-L-threonyl-[protein] + a di-trans,poly-cis-dolichyl phosphate + H(+). O-mannosyl-transferase that transfers mannosyl residues to the hydroxyl group of serine or threonine residues of proteins. The sequence is that of Protein O-mannosyl-transferase tmem260 from Dictyostelium discoideum (Social amoeba).